Reading from the N-terminus, the 257-residue chain is Protein IMPACT homolog (257 aa).

An RWD domain is found at 9-102; it reads AEIESLASIF…SLVQDFIRDL (94 aa).

This sequence belongs to the IMPACT family. In terms of assembly, interacts with gcn-1; prevents the interaction of gcn-1 with gcn-2 and inhibits gcn-2 kinase activity. Interaction with rpl-39; this interaction occurs in a gcn-1-independent manner. Associates with ribosomes; this interaction occurs in a gcn-1-independent manner. Associates with actin; this interaction occurs in a gcn-1-independent manner.

It is found in the cytoplasm. Its function is as follows. Translational regulator that ensures constant high levels of translation under amino acid starvation. Plays a role as a negative regulator of the gcn-2 kinase activity; impairs gcn-1-mediated gcn-2 activation, and hence gcn-2-mediated eIF-2-alpha phosphorylation and subsequent down-regulation of protein synthesis in amino acid-starved cells. Plays a role in differentiation of neuronal cells by stimulating neurite outgrowth. This Caenorhabditis elegans protein is Protein IMPACT homolog.